Reading from the N-terminus, the 393-residue chain is S-adenosylmethionine synthase (393 aa).

Histidine 16 is a binding site for ATP. Mg(2+) is bound at residue aspartate 18. A K(+)-binding site is contributed by glutamate 44. L-methionine is bound by residues glutamate 57 and glutamine 100. Positions glutamine 100–glutamine 110 are flexible loop. ATP-binding positions include aspartate 167–lysine 169, arginine 238–phenylalanine 239, aspartate 247, arginine 253–lysine 254, alanine 270, and lysine 274. Aspartate 247 serves as a coordination point for L-methionine. Lysine 278 contributes to the L-methionine binding site.

This sequence belongs to the AdoMet synthase family. As to quaternary structure, homotetramer; dimer of dimers. It depends on Mg(2+) as a cofactor. K(+) serves as cofactor.

The protein resides in the cytoplasm. It catalyses the reaction L-methionine + ATP + H2O = S-adenosyl-L-methionine + phosphate + diphosphate. It participates in amino-acid biosynthesis; S-adenosyl-L-methionine biosynthesis; S-adenosyl-L-methionine from L-methionine: step 1/1. Its function is as follows. Catalyzes the formation of S-adenosylmethionine (AdoMet) from methionine and ATP. The overall synthetic reaction is composed of two sequential steps, AdoMet formation and the subsequent tripolyphosphate hydrolysis which occurs prior to release of AdoMet from the enzyme. The polypeptide is S-adenosylmethionine synthase (Methylibium petroleiphilum (strain ATCC BAA-1232 / LMG 22953 / PM1)).